A 692-amino-acid polypeptide reads, in one-letter code: Follicle-stimulating hormone receptor (692 aa).

An N-terminal signal peptide occupies residues 1-17; it reads MALLLVSLLAFLGTGSG. Intrachain disulfides connect Cys18–Cys25 and Cys23–Cys32. Residues 18 to 46 form the LRRNT domain; that stretch reads CHHWLCHCSNRVFLCQDSKVTEIPTDLPR. The Extracellular portion of the chain corresponds to 18-365; it reads CHHWLCHCSN…EDIMGYNILR (348 aa). LRR repeat units follow at residues 49–72, 73–97, 98–118, 119–143, 144–169, 170–192, 193–216, 217–240, and 241–259; these read IELRFVLTKLRVIPKGSFAGFGDL, EKIEISQNDVLEVIEADVFSNLPKL, HEIRIEKANNLLYINPEAFQN, LPSLRYLLISNTGIKHLPAVHKIQS, LQKVLLDIQDNINIHIVARNSFMGLS, FESVILWLSKNGIEEIHNCAFNG, TQLDELNLSDNNNLEELPNDVFQG, ASGPVILDISRTKVHSLPNHGLEN, and LKKLRARSTYRLKKLPNLD. Residues Asn191 and Asn199 are each glycosylated (N-linked (GlcNAc...) asparagine). 4 cysteine pairs are disulfide-bonded: Cys275-Cys345, Cys276-Cys292, Cys276-Cys355, and Cys292-Cys337. Asn293 carries an N-linked (GlcNAc...) asparagine glycan. Tyr334 carries the post-translational modification Sulfotyrosine. The chain crosses the membrane as a helical span at residues 366 to 386; the sequence is VLIWFISILAITGNTTVLVVL. Over 387-397 the chain is Cytoplasmic; it reads TTSQYKLTVPR. A helical transmembrane segment spans residues 398–420; the sequence is FLMCNLAFADLCIGIYLLLIASV. Topologically, residues 421 to 442 are extracellular; it reads DIHTKSQYHNYAIDWQTGAGCD. A disulfide bridge connects residues Cys441 and Cys516. A helical membrane pass occupies residues 443-464; sequence AAGFFTVFASELSVYTLTAITL. The Cytoplasmic segment spans residues 465 to 484; sequence ERWHTITHAMQLECKVQLRH. Residues 485 to 507 traverse the membrane as a helical segment; sequence AASVMVLGWTFAFAAALFPIFGI. Topologically, residues 508 to 527 are extracellular; that stretch reads SSYMKVSICLPMDIDSPLSQ. A helical transmembrane segment spans residues 528-549; sequence LYVMALLVLNVLAFVVICGCYT. Residues 550 to 572 are Cytoplasmic-facing; it reads HIYLTVRNPTIVSSSSDTKIAKR. Residues 573-596 traverse the membrane as a helical segment; sequence MATLIFTDFLCMAPISFFAISASL. Residues 597-607 are Extracellular-facing; the sequence is KVPLITVSKAK. The helical transmembrane segment at 608–629 threads the bilayer; it reads ILLVLFYPINSCANPFLYAIFT. The Cytoplasmic portion of the chain corresponds to 630–692; sequence KNFRRDFFIL…LVPLNHSSQN (63 aa).

Belongs to the G-protein coupled receptor 1 family. FSH/LSH/TSH subfamily. As to quaternary structure, homotrimer. Functions as a homotrimer binding the FSH hormone heterodimer composed of CGA and FSHB. Interacts with ARRB2. Interacts with APPL2; interaction is independent of follicle stimulating hormone stimulation. In terms of processing, N-glycosylated; indirectly required for FSH-binding, possibly via a conformational change that allows high affinity binding of hormone. Sulfated. As to expression, sertoli cells and ovarian granulosa cells.

The protein localises to the cell membrane. Functionally, g protein-coupled receptor for follitropin, the follicle-stimulating hormone. Through cAMP production activates the downstream PI3K-AKT and ERK1/ERK2 signaling pathways. This Rattus norvegicus (Rat) protein is Follicle-stimulating hormone receptor (Fshr).